We begin with the raw amino-acid sequence, 126 residues long: MAKLTKDELIEAFKEMTLIELSEFVKEFEEVFEVTAAAPVAVAAAGAAPAAAEEEKTEFDVVLEDAGAKKIGVIKAVRELVSGLGLKEAKELVEGAPKAILEGANKDDAEAAKAKLEEAGAKVTLK.

Belongs to the bacterial ribosomal protein bL12 family. Homodimer. Part of the ribosomal stalk of the 50S ribosomal subunit. Forms a multimeric L10(L12)X complex, where L10 forms an elongated spine to which 2 to 4 L12 dimers bind in a sequential fashion. Binds GTP-bound translation factors.

Its function is as follows. Forms part of the ribosomal stalk which helps the ribosome interact with GTP-bound translation factors. Is thus essential for accurate translation. In Corynebacterium diphtheriae (strain ATCC 700971 / NCTC 13129 / Biotype gravis), this protein is Large ribosomal subunit protein bL12.